A 203-amino-acid chain; its full sequence is MTSPATNKPAAYDFLVKLLLIGDSGVGKSCLLLRFSDGSFTPSFIATIGIDFKIRTIELEGKRIKLQIWDTAGQERFRTITTAYYRGAMGILLVYDVTDEKSFGSIRNWIRNIEQHASDSVNKMLIGNKCDMTEKKVVDSSRGKSLADEYGIKFLETSAKNSVNVEEAFIGLAKDIKKRMIDTPNDPDHTICITPNNKKNTCC.

GTP is bound by residues 22 to 29 (GDSGVGKS), 70 to 74 (DTAGQ), and 128 to 131 (NKCD). Residues C202 and C203 are each lipidated (S-geranylgeranyl cysteine).

This sequence belongs to the small GTPase superfamily. Rab family.

The protein resides in the cell membrane. Protein transport. Probably involved in vesicular traffic. The chain is Ras-related protein Rab-8B (rab8B) from Dictyostelium discoideum (Social amoeba).